Reading from the N-terminus, the 152-residue chain is Superoxide dismutase [Cu-Zn] 2 (152 aa).

Residues His-45, His-47, and His-62 each coordinate Cu cation. A disulfide bond links Cys-56 and Cys-145. Zn(2+) contacts are provided by His-62, His-70, His-79, and Asp-82. His-119 is a Cu cation binding site.

Belongs to the Cu-Zn superoxide dismutase family. Homodimer. Cu cation serves as cofactor. Zn(2+) is required as a cofactor.

The protein localises to the cytoplasm. The catalysed reaction is 2 superoxide + 2 H(+) = H2O2 + O2. In terms of biological role, destroys radicals which are normally produced within the cells and which are toxic to biological systems. This Oryza sativa subsp. japonica (Rice) protein is Superoxide dismutase [Cu-Zn] 2 (SODCC2).